A 1715-amino-acid polypeptide reads, in one-letter code: MGTLLPPVGSEVFRRFTPSSLNEIQQRQQIKEERKRANAEVSEELFSEPASDLEAGKPLPFIYGEPPHELLNVPLEDMDPFYQSQKTFIVLSKGNVIHRFNAESSLYLLSPFNSMRIFAIKILVHSLFSLFIMATILTNCVFMTLSDPPAWSKTVEYVFTFIYTFEATIKVVSRGFCVGQFTFLKDPWNWLDFMVISMAYLTELVDLGNVSVLRTFRVLRALKTITVIPGLKTIVGALIQSVKKLADAMVLTVFCLSVFALIGLQLFMGNLRQKCVLIPPVVSNLTFEVTNSSHGYFGNDTRGNDTENKDLMFEFEEHINNPDNYYYLAGQRDPLLCGNSSDAGVCPESYICLKVGRNPNYGYTSYDSFGWAFLALFRLMTQDFWENLFQLTLRAAGKTYMIFFVVVIFLGSFYLINLILAVVAMAYAEQNQATMAEAKQKEEEYLHILEALKKREEEQAAWKEALKVQEPHNFEDDHKLCPPCWYAFANVFLKWDCCSCWRHLKRCLSAIVMDPFVDLGITICIILNTIFMAMEHYPMSADFEELLSVGNLVFTGIFTCEMVLKILAMDPYFYFQVGWNIFDSIIVTMSLVELGLANVQGLSVLRSFRLMRVFKLAKSWPTLNMLIKIIGNSVGALGNLTLVLAIIVFIFAVVGMQLFGKNYKDCVCRISEDCKLPRWHMNDFFHAFLIIFRVLCGEWIDTMWDCMEVSGQTMCLIVYMMVLVIGNLVVLNLFLALLLSSFSGDNLAAQDDEGENNLQIAVNRIKRAVAWAKTWILLHLCILTESNHNQHDAVSDEEENRITKNILALTSVTSDQFFKVPIAEAESDSEDSDDDDVDEDKHSRCDESSFCSTVQDPEVKENEADEDNVSKMPMDCWSENCYSRCPSLDIDTSQGKGKVWCNIRRACFIIVENNYFESFIVFMILLSSGALAFEDIYLEKHQLIKTILEYADKVFTYVFVVEMVLKWFAYGFKSYFSNAWCWLDFLIVDVSLVSLTANILGYSELGAIKSLRTLRALRPLRALSRFEGMRVVVNALVGAVPSIFNVLLVCLIFWLIFSIMGVNLFAGKFSYCFNETSQEQFDKKIVNNKTECIALIEANFTEVRWKNLKVNYDNVGIGYLSLLQVATFKGWMEIMYAAVDSRDVESQPIYEVNIYMYLYFVIFIIFGSFFTLNLFIGVIIDNFNQQKAKLGGQDIFMTEEQKKYYNAMKKLGSKKPQKPVPRPENALQGLVFDLVTKQIFDVFIMVLICLNMVTMMVETDEQTKEKEDILYWINVIFIVIFTTECILKTIALRRHYFSIGWNVFDFVVVILSILGLLLADIIEKYFVSPTLFRVIRLARIGRVLRLIRGAKGIRTLLFALMMSLPALFNIGLLLFLIMFIFSIFGMSNFAYVKKEAMIDDMFNFETFGNSMICLFMITTSAGWDGLLSPIMNKPPDCDPDLENPGTTVRGNCGSPAIGIVFFSTYIIMSFLVVVNMYIAIILENFNVATEESSDPLCEDDFDMFYETWEKFDPDATQFIQYSKLSDFCDTLKEPLRIPKPNTIKLISLDLPLVPGDKIHCMDILLALTAEVLGDSDEMDTLKATMEEKFMANNPSKVSYEPISSTLRRKEEEVAARVIQRAYRKYLLQRTVRLASFTYREKTEGWGTKKAPETEGLLCKQFNQLFGNKRETEEPLMSKNDELGQVELQSEVLLHAAPPLNTLELLLGTSERESLV.

Residues 1-126 lie on the Cytoplasmic side of the membrane; that stretch reads MGTLLPPVGS…IFAIKILVHS (126 aa). An I repeat occupies 108 to 431; that stretch reads LLSPFNSMRI…VVAMAYAEQN (324 aa). A helical membrane pass occupies residues 127 to 145; that stretch reads LFSLFIMATILTNCVFMTL. Residues 146–152 are Extracellular-facing; the sequence is SDPPAWS. The helical transmembrane segment at 153-173 threads the bilayer; that stretch reads KTVEYVFTFIYTFEATIKVVS. At 174–187 the chain is on the cytoplasmic side; that stretch reads RGFCVGQFTFLKDP. The helical transmembrane segment at 188–205 threads the bilayer; that stretch reads WNWLDFMVISMAYLTELV. The Extracellular segment spans residues 206–211; sequence DLGNVS. The N-linked (GlcNAc...) asparagine glycan is linked to Asn209. The helical transmembrane segment at 212-228 threads the bilayer; sequence VLRTFRVLRALKTITVI. Residues 229–247 lie on the Cytoplasmic side of the membrane; the sequence is PGLKTIVGALIQSVKKLAD. A helical transmembrane segment spans residues 248 to 267; it reads AMVLTVFCLSVFALIGLQLF. Over 268–368 the chain is Extracellular; the sequence is MGNLRQKCVL…PNYGYTSYDS (101 aa). Cysteines 275 and 337 form a disulfide. N-linked (GlcNAc...) asparagine glycosylation is found at Asn284, Asn304, and Asn339. Cys346 and Cys352 form a disulfide bridge. The segment at residues 369-393 is an intramembrane region (pore-forming); it reads FGWAFLALFRLMTQDFWENLFQLTL. Residues 394–400 lie on the Extracellular side of the membrane; that stretch reads RAAGKTY. A helical membrane pass occupies residues 401–421; it reads MIFFVVVIFLGSFYLINLILA. Topologically, residues 422 to 515 are cytoplasmic; the sequence is VVAMAYAEQN…RCLSAIVMDP (94 aa). Residues 497-768 form an II repeat; sequence CCSCWRHLKR…QIAVNRIKRA (272 aa). The helical transmembrane segment at 516–534 threads the bilayer; it reads FVDLGITICIILNTIFMAM. Topologically, residues 535–545 are extracellular; sequence EHYPMSADFEE. A helical membrane pass occupies residues 546 to 565; it reads LLSVGNLVFTGIFTCEMVLK. Residues 566 to 579 lie on the Cytoplasmic side of the membrane; the sequence is ILAMDPYFYFQVGW. The helical transmembrane segment at 580–599 threads the bilayer; that stretch reads NIFDSIIVTMSLVELGLANV. Residues 600–601 lie on the Extracellular side of the membrane; sequence QG. Residues 602-619 traverse the membrane as a helical segment; it reads LSVLRSFRLMRVFKLAKS. Over 620 to 635 the chain is Cytoplasmic; it reads WPTLNMLIKIIGNSVG. A helical membrane pass occupies residues 636–654; the sequence is ALGNLTLVLAIIVFIFAVV. The Extracellular segment spans residues 655-683; sequence GMQLFGKNYKDCVCRISEDCKLPRWHMND. Cysteines 668 and 674 form a disulfide. The segment at residues 684 to 704 is an intramembrane region (pore-forming); sequence FFHAFLIIFRVLCGEWIDTMW. The Extracellular segment spans residues 705–715; it reads DCMEVSGQTMC. A disulfide bond links Cys706 and Cys715. A helical membrane pass occupies residues 716–734; that stretch reads LIVYMMVLVIGNLVVLNLF. The Cytoplasmic segment spans residues 735-915; the sequence is LALLLSSFSG…ACFIIVENNY (181 aa). A disordered region spans residues 824 to 865; sequence EAESDSEDSDDDDVDEDKHSRCDESSFCSTVQDPEVKENEAD. Positions 825 to 838 are enriched in acidic residues; it reads AESDSEDSDDDDVD. An III repeat occupies 896–1211; the sequence is KGKVWCNIRR…KKYYNAMKKL (316 aa). Residues 916–933 traverse the membrane as a helical segment; sequence FESFIVFMILLSSGALAF. The Extracellular segment spans residues 934–946; it reads EDIYLEKHQLIKT. The chain crosses the membrane as a helical span at residues 947-965; the sequence is ILEYADKVFTYVFVVEMVL. Topologically, residues 966-979 are cytoplasmic; it reads KWFAYGFKSYFSNA. A helical transmembrane segment spans residues 980-998; the sequence is WCWLDFLIVDVSLVSLTAN. The Extracellular portion of the chain corresponds to 999–1006; that stretch reads ILGYSELG. The chain crosses the membrane as a helical span at residues 1007 to 1025; the sequence is AIKSLRTLRALRPLRALSR. The Cytoplasmic segment spans residues 1026 to 1042; the sequence is FEGMRVVVNALVGAVPS. A helical transmembrane segment spans residues 1043–1062; it reads IFNVLLVCLIFWLIFSIMGV. Over 1063–1115 the chain is Extracellular; sequence NLFAGKFSYCFNETSQEQFDKKIVNNKTECIALIEANFTEVRWKNLKVNYDNV. Cys1072 and Cys1092 are joined by a disulfide. N-linked (GlcNAc...) asparagine glycosylation is found at Asn1074 and Asn1088. Positions 1116 to 1137 form an intramembrane region, pore-forming; that stretch reads GIGYLSLLQVATFKGWMEIMYA. At 1138–1154 the chain is on the extracellular side; sequence AVDSRDVESQPIYEVNI. A helical transmembrane segment spans residues 1155–1176; it reads YMYLYFVIFIIFGSFFTLNLFI. Residues 1177 to 1239 are Cytoplasmic-facing; it reads GVIIDNFNQQ…LVFDLVTKQI (63 aa). An important for rapid channel inactivation region spans residues 1195–1197; sequence IFM. One copy of the IV repeat lies at 1220–1517; the sequence is VPRPENALQG…WEKFDPDATQ (298 aa). Residues 1240–1257 traverse the membrane as a helical segment; that stretch reads FDVFIMVLICLNMVTMMV. The Extracellular segment spans residues 1258–1268; sequence ETDEQTKEKED. Residues 1269-1287 form a helical membrane-spanning segment; the sequence is ILYWINVIFIVIFTTECIL. Residues 1288–1299 are Cytoplasmic-facing; the sequence is KTIALRRHYFSI. Residues 1300–1317 traverse the membrane as a helical segment; that stretch reads GWNVFDFVVVILSILGLL. The Extracellular portion of the chain corresponds to 1318-1330; that stretch reads LADIIEKYFVSPT. Residues 1331 to 1347 form a helical membrane-spanning segment; the sequence is LFRVIRLARIGRVLRLI. Over 1348 to 1366 the chain is Cytoplasmic; sequence RGAKGIRTLLFALMMSLPA. Residues 1367–1384 traverse the membrane as a helical segment; it reads LFNIGLLLFLIMFIFSIF. At 1385–1406 the chain is on the extracellular side; that stretch reads GMSNFAYVKKEAMIDDMFNFET. Residues 1407–1429 constitute an intramembrane region (pore-forming); that stretch reads FGNSMICLFMITTSAGWDGLLSP. At 1430 to 1458 the chain is on the extracellular side; the sequence is IMNKPPDCDPDLENPGTTVRGNCGSPAIG. Cys1437 and Cys1452 form a disulfide bridge. The helical transmembrane segment at 1459–1481 threads the bilayer; it reads IVFFSTYIIMSFLVVVNMYIAII. The Cytoplasmic portion of the chain corresponds to 1482–1715; it reads LENFNVATEE…LGTSERESLV (234 aa). The 30-residue stretch at 1611 to 1640 folds into the IQ domain; that stretch reads EEVAARVIQRAYRKYLLQRTVRLASFTYRE.

Belongs to the sodium channel (TC 1.A.1.10) family. Nav1.4/SCN4A subfamily. As to quaternary structure, voltage-gated sodium (Nav) channels consist of an ion-conducting alpha subunit which is functional on its own associated with regulatory beta subunits.

It is found in the cell membrane. It carries out the reaction Na(+)(in) = Na(+)(out). Functionally, pore-forming subunit of a voltage-gated sodium (Nav) channel that directly mediates the depolarizing phase of action potentials in excitable membranes. Navs, also called VGSCs (voltage-gated sodium channels) or VDSCs (voltage-dependent sodium channels), operate by switching between closed and open conformations depending on the voltage difference across the membrane. In the open conformation they allow Na(+) ions to selectively pass through the pore, along their electrochemical gradient. The influx of Na+ ions provokes membrane depolarization, initiating the propagation of electrical signals throughout cells and tissues. In Tetraodon nigroviridis (Spotted green pufferfish), this protein is Sodium channel protein type 4 subunit alpha B (scn4ab).